The following is a 383-amino-acid chain: Na(+)/H(+) antiporter NhaA (383 aa).

11 helical membrane passes run 10 to 30 (LIGGLILFSAALLAIVVNNSP), 56 to 76 (LMHWINDGLMAIYFLYIGLEI), 91 to 111 (IITPAIAAFAGLAMPSLIYLS), 121 to 141 (GWAIPSATDIAFTLGILALLG), 150 to 170 (LLVITIAIFDDIAAIAIIAIF), 174 to 194 (SLSLLSLSLGTLFILAMIICN), 206 to 226 (VVLGFFAWFCTIKSGVHATLA), 254 to 274 (PWIIYFILPVFAFANAGISFS), 289 to 308 (IIWGLFVGKQLGIFSILAVF), 327 to 347 (GISLLCGIGFTMSLFIGVLAF), and 355 to 375 (AIKIGVVVGSVLSGFFGYIVL).

It belongs to the NhaA Na(+)/H(+) (TC 2.A.33) antiporter family.

It is found in the cell inner membrane. It carries out the reaction Na(+)(in) + 2 H(+)(out) = Na(+)(out) + 2 H(+)(in). Na(+)/H(+) antiporter that extrudes sodium in exchange for external protons. The sequence is that of Na(+)/H(+) antiporter NhaA from Francisella tularensis subsp. tularensis (strain SCHU S4 / Schu 4).